The following is a 569-amino-acid chain: Cationic amino acid transporter 5 (569 aa).

Residues 1–67 (MEGEERGYWR…KQSEHEMKRC (67 aa)) lie on the Cytoplasmic side of the membrane. A helical membrane pass occupies residues 68-88 (LTWWDLVWFGFGSVIGAGIFV). Residues 89 to 97 (LTGQEAHEQ) are Extracellular-facing. The chain crosses the membrane as a helical span at residues 98-118 (AGPAIVLSYVVSGLSAMLSVF). The Cytoplasmic portion of the chain corresponds to 119–143 (CYTEFAVEIPVAGGSFAYLRIELGD). The helical transmembrane segment at 144–164 (FAAFITAGNILLESIVGTAAV) threads the bilayer. The Extracellular portion of the chain corresponds to 165-192 (ARAWTSYFATLLNRSPNALRIKTDLSSG). Residues 193-213 (FNLLDPIAVVVIAASATIASI) form a helical membrane-spanning segment. Residues 214-222 (STRKTSLLN) are Cytoplasmic-facing. The helical transmembrane segment at 223-243 (WIASAINTLVIFFVIIAGFIH) threads the bilayer. Topologically, residues 244 to 251 (ADTSNLTP) are extracellular. Residues 252-272 (FLPFGPEGVFRAAAVVYFAYG) form a helical membrane-spanning segment. The Cytoplasmic portion of the chain corresponds to 273–290 (GFDSIATMAEETKNPSRD). Residues 291-311 (IPIGLLGSMSIITVIYCLMAL) traverse the membrane as a helical segment. Over 312-341 (SLSMMQKYTDIDPNAAYSVAFQSVGMKWGK) the chain is Extracellular. Residues 342–362 (YLVALGALKGMTTVLLVGALG) traverse the membrane as a helical segment. Residues 363–389 (QARYVTHIARTHMIPPIFALVHPKTGT) lie on the Cytoplasmic side of the membrane. Residues 390–410 (PINANLLVAIPSALIAFFSGL) traverse the membrane as a helical segment. Asp-411 is a topological domain (extracellular). The chain crosses the membrane as a helical span at residues 412–432 (VLASLLSISTLFIFTMMPIAL). The Cytoplasmic segment spans residues 433 to 450 (LVRRYYVRQDTPRVHLIK). The chain crosses the membrane as a helical span at residues 451–471 (LITCLLFVVVSSMGTSAYWGM). The Extracellular segment spans residues 472 to 477 (QRKGSW). The helical transmembrane segment at 478–498 (IGYTVTVPFWFLGTLGIVFFV) threads the bilayer. Topologically, residues 499-505 (PQQRTPK) are cytoplasmic. A helical transmembrane segment spans residues 506 to 526 (VWGVPLVPWLPCLSIATNIFL). At 527-537 (MGSLGAMAFVR) the chain is on the extracellular side. A helical transmembrane segment spans residues 538 to 558 (FGVCTLAMLLYYFLLGLHATF). The Cytoplasmic portion of the chain corresponds to 559–569 (DMAHQQIVPRT).

It belongs to the amino acid-polyamine-organocation (APC) superfamily. Cationic amino acid transporter (CAT) (TC 2.A.3.3) family. In terms of tissue distribution, expressed in roots, stems, flowers, seeds, and leaves. Mostly present in leaf rims and cotyledons of developing seedlings.

The protein localises to the cell membrane. In terms of biological role, high-affinity permease involved in the transport of the cationic amino acids (e.g. arginine, and, to a lower extent, citrulline and glutamate). Transport mostly basic amino acids, and, to a lower extent neutral and acidic amino acids. This chain is Cationic amino acid transporter 5 (CAT5), found in Arabidopsis thaliana (Mouse-ear cress).